The sequence spans 443 residues: Cyclic AMP receptor 4 (443 aa).

At 1–11 (MKVLQEINLTY) the chain is on the extracellular side. N-linked (GlcNAc...) asparagine glycosylation occurs at N8. A helical transmembrane segment spans residues 12–32 (SILVIADFSSIFGCLLVLIAF). Residues 33–44 (KKLKLLRNHITR) are Cytoplasmic-facing. Residues 45–65 (VIACFCVSSLLKDIISTGLTL) form a helical membrane-spanning segment. Residues 66–89 (SLGPQNEAGSTSFQCYLYAITITY) lie on the Extracellular side of the membrane. The helical transmembrane segment at 90–110 (GSLACWLWTLCLAFSIYNLIV) threads the bilayer. At 111 to 119 (KREPEPEKY) the chain is on the cytoplasmic side. Residues 120–140 (EKFYHGVCWTIPLICVIVMLA) traverse the membrane as a helical segment. The Extracellular portion of the chain corresponds to 141-161 (KKTIEPVGNWCWISEKYVGYR). A helical membrane pass occupies residues 162–182 (FGLFYGPFFAIWIISAVLVGL). Residues 183–208 (TSRYTYSVIRNSVSDNKDKHMTYQFK) are Cytoplasmic-facing. A helical membrane pass occupies residues 209 to 229 (LINYIIVFLLCWVFAIVNRIL). Over 230–263 (NGLGYYPTLPNILHTYFSVSHGFFASVTFIYNNP) the chain is Extracellular. The helical transmembrane segment at 264 to 284 (LMWRYWGSKIFLIFAKFGYFV) threads the bilayer. Topologically, residues 285-443 (ELQRRLDRNK…DEREKKDNKF (159 aa)) are cytoplasmic. Disordered regions lie at residues 325-354 (NDIS…QQSP) and 396-443 (SFEI…DNKF). The span at 332–352 (QQQQQQQQTPQQPQQQFQQQQ) shows a compositional bias: low complexity. A compositionally biased stretch (polar residues) spans 396-410 (SFEITQPSNDLNTIE). Residues 411-425 (NNNNYNNNNNNNNNN) show a composition bias toward low complexity. Over residues 429–443 (IEKEKDEREKKDNKF) the composition is skewed to basic and acidic residues.

The protein belongs to the G-protein coupled receptor 5 family. C-terminal Ser or Thr residues may be phosphorylated.

The protein localises to the membrane. Receptor for cAMP. Regulates axial patterning and cellular differentiation during late development. The activity of this receptor is mediated by G proteins. The chain is Cyclic AMP receptor 4 (carD) from Dictyostelium discoideum (Social amoeba).